The sequence spans 263 residues: uncharacterized protein (263 aa).

17–41 (GGGRGLGAAIALAFAQAGADVLIAS) is an NAD(+) binding site. Serine 147 contributes to the substrate binding site. Residue tyrosine 160 is the Proton acceptor of the active site. Lysine 164 serves as a coordination point for NAD(+).

Belongs to the short-chain dehydrogenases/reductases (SDR) family.

This is an uncharacterized protein from Mycobacterium tuberculosis (strain CDC 1551 / Oshkosh).